Here is a 792-residue protein sequence, read N- to C-terminus: Alpha-1,6-mannosylglycoprotein 6-beta-N-acetylglucosaminyltransferase B (792 aa).

The Cytoplasmic portion of the chain corresponds to 1 to 24 (MITVNPDGKIMVRRCLVTLRPFRL). The helical; Signal-anchor for type II membrane protein transmembrane segment at 25 to 45 (FVLGIGFFTLCFLMTSLGGQF) threads the bilayer. At 46-792 (SARRLGDSPF…GQVALCQGCL (747 aa)) the chain is on the lumenal side. Asn127 carries an N-linked (GlcNAc...) asparagine glycan. Cystine bridges form between Cys157–Cys195, Cys168–Cys208, Cys184–Cys353, Cys387–Cys644, Cys700–Cys775, Cys704–Cys777, Cys711–Cys764, Cys732–Cys753, and Cys788–Cys791.

It belongs to the glycosyltransferase 18 family. Requires Mn(2+) as cofactor. As to expression, predominantly expressed in brain. Expressed in all areas of the adult and fetal brain. Also expressed at much lower levels in testis, spleen and thymus.

Its subcellular location is the golgi apparatus membrane. It carries out the reaction N(4)-{beta-D-GlcNAc-(1-&gt;2)-[beta-D-GlcNAc-(1-&gt;4)]-alpha-D-Man-(1-&gt;3)-[beta-D-GlcNAc-(1-&gt;2)-alpha-D-Man-(1-&gt;6)]-beta-D-Man-(1-&gt;4)-beta-D-GlcNAc-(1-&gt;4)-beta-D-GlcNAc}-L-asparaginyl-[protein] + UDP-N-acetyl-alpha-D-glucosamine = N(4)-{beta-D-GlcNAc-(1-&gt;2)-[beta-D-GlcNAc-(1-&gt;4)]-alpha-D-Man-(1-&gt;3)-[beta-D-GlcNAc-(1-&gt;2)-[beta-D-GlcNAc-(1-&gt;6)]-alpha-D-Man-(1-&gt;6)]-beta-D-Man-(1-&gt;4)-beta-D-GlcNAc-(1-&gt;4)-beta-D-GlcNAc}-L-asparaginyl-[protein] + UDP + H(+). It catalyses the reaction 3-O-[N-acetyl-beta-D-glucosaminyl-(1-&gt;2)-alpha-D-mannosyl]-L-seryl-[protein] + UDP-N-acetyl-alpha-D-glucosamine = O(3)-{N-acetyl-beta-D-glucosaminyl-(1-&gt;2)-[N-acetyl-beta-D-glucosaminyl-(1-&gt;6)]-alpha-D-mannosyl}-L-seryl-[protein] + UDP + H(+). The enzyme catalyses 3-O-[N-acetyl-beta-D-glucosaminyl-(1-&gt;2)-alpha-D-mannosyl]-L-threonyl-[protein] + UDP-N-acetyl-alpha-D-glucosamine = O(3)-{N-acetyl-beta-D-glucosaminyl-(1-&gt;2)-[N-acetyl-beta-D-glucosaminyl-(1-&gt;6)]-alpha-D-mannosyl}-L-threonyl-[protein] + UDP + H(+). Its pathway is protein modification; protein glycosylation. Functionally, glycosyltransferase that acts on alpha-linked mannose of N-glycans and O-mannosyl glycans. Catalyzes the transfer of N-acetylglucosamine (GlcNAc) to the beta 1-6 linkage of the mannose residue of GlcNAc-beta1,2-Man-alpha on both the alpha1,3- and alpha1,6-linked mannose arms in the core structure of N-glycan. Also acts on the GlcNAc-beta1,2-Man-alpha1-Ser/Thr moiety, forming a 2,6-branched structure in brain O-mannosyl glycan. Plays an active role in modulating integrin and laminin-dependent adhesion and migration of neuronal cells via its activity in the O-mannosyl glycan pathway. The polypeptide is Alpha-1,6-mannosylglycoprotein 6-beta-N-acetylglucosaminyltransferase B (MGAT5B) (Homo sapiens (Human)).